The primary structure comprises 246 residues: 1-(5-phosphoribosyl)-5-[(5-phosphoribosylamino)methylideneamino] imidazole-4-carboxamide isomerase (246 aa).

The active-site Proton acceptor is Asp-8. The active-site Proton donor is the Asp-131.

Belongs to the HisA/HisF family.

The protein localises to the cytoplasm. The catalysed reaction is 1-(5-phospho-beta-D-ribosyl)-5-[(5-phospho-beta-D-ribosylamino)methylideneamino]imidazole-4-carboxamide = 5-[(5-phospho-1-deoxy-D-ribulos-1-ylimino)methylamino]-1-(5-phospho-beta-D-ribosyl)imidazole-4-carboxamide. It functions in the pathway amino-acid biosynthesis; L-histidine biosynthesis; L-histidine from 5-phospho-alpha-D-ribose 1-diphosphate: step 4/9. The polypeptide is 1-(5-phosphoribosyl)-5-[(5-phosphoribosylamino)methylideneamino] imidazole-4-carboxamide isomerase (Polaromonas sp. (strain JS666 / ATCC BAA-500)).